The chain runs to 201 residues: 3-isopropylmalate dehydratase small subunit (201 aa).

The protein belongs to the LeuD family. LeuD type 1 subfamily. In terms of assembly, heterodimer of LeuC and LeuD.

It catalyses the reaction (2R,3S)-3-isopropylmalate = (2S)-2-isopropylmalate. It functions in the pathway amino-acid biosynthesis; L-leucine biosynthesis; L-leucine from 3-methyl-2-oxobutanoate: step 2/4. Catalyzes the isomerization between 2-isopropylmalate and 3-isopropylmalate, via the formation of 2-isopropylmaleate. In Salmonella paratyphi A (strain ATCC 9150 / SARB42), this protein is 3-isopropylmalate dehydratase small subunit.